The following is a 106-amino-acid chain: MATFELYRRSTIGMCLTETLDEMVQSGTLSPELAIQVLVQFDKSMTEALESQVKTKVSIKGHLHTYRFCDNVWTFILQDAMFKSDDRQENVSRVKIVACDSKLLTQ.

Belongs to the TFIIA subunit 2 family. In terms of assembly, TFIIA is a heterodimer of the large unprocessed subunit 1 and a small subunit gamma. It was originally believed to be a heterotrimer of an alpha, a beta and a gamma subunit.

The protein localises to the nucleus. TFIIA is a component of the transcription machinery of RNA polymerase II and plays an important role in transcriptional activation. TFIIA in a complex with TBP mediates transcriptional activity. The polypeptide is Transcription initiation factor IIA subunit 2 (TFIIA-S) (Arabidopsis thaliana (Mouse-ear cress)).